Reading from the N-terminus, the 484-residue chain is Alginate production protein AlgE (484 aa).

The signal sequence occupies residues 1-25 (MSRKQRISAGLGLGASLLCCNPLFA). Positions 93 to 103 (TDPTDPNEEPG) are enriched in acidic residues. The disordered stretch occupies residues 93–118 (TDPTDPNEEPGGDPANGFSRDSSRDP).

It belongs to the AlgE family.

The protein localises to the cell outer membrane. It participates in glycan biosynthesis; alginate biosynthesis. Has non-porin-like, channel-forming properties and probably functions as an alginate permeability pore. In Azotobacter vinelandii, this protein is Alginate production protein AlgE (algE).